A 432-amino-acid chain; its full sequence is Glutamate-1-semialdehyde 2,1-aminomutase 2 (432 aa).

N6-(pyridoxal phosphate)lysine is present on lysine 268.

It belongs to the class-III pyridoxal-phosphate-dependent aminotransferase family. HemL subfamily. As to quaternary structure, homodimer. It depends on pyridoxal 5'-phosphate as a cofactor.

The protein resides in the cytoplasm. The catalysed reaction is (S)-4-amino-5-oxopentanoate = 5-aminolevulinate. It functions in the pathway porphyrin-containing compound metabolism; protoporphyrin-IX biosynthesis; 5-aminolevulinate from L-glutamyl-tRNA(Glu): step 2/2. In Listeria monocytogenes serovar 1/2a (strain ATCC BAA-679 / EGD-e), this protein is Glutamate-1-semialdehyde 2,1-aminomutase 2.